Reading from the N-terminus, the 351-residue chain is Protein-glutamate methylesterase/protein-glutamine glutaminase 2 (351 aa).

The Response regulatory domain maps to 4-121 (KVLVVDDSAL…PQDFNEYQDL (118 aa)). At Asp-55 the chain carries 4-aspartylphosphate. Positions 156–348 (RVINTQLVAI…DKMLNYLASL (193 aa)) constitute a CheB-type methylesterase domain. Residues Ser-168, His-194, and Asp-290 contribute to the active site.

This sequence belongs to the CheB family. Post-translationally, phosphorylated by CheA. Phosphorylation of the N-terminal regulatory domain activates the methylesterase activity.

The protein resides in the cytoplasm. The catalysed reaction is [protein]-L-glutamate 5-O-methyl ester + H2O = L-glutamyl-[protein] + methanol + H(+). It catalyses the reaction L-glutaminyl-[protein] + H2O = L-glutamyl-[protein] + NH4(+). Its function is as follows. Involved in chemotaxis. Part of a chemotaxis signal transduction system that modulates chemotaxis in response to various stimuli. Catalyzes the demethylation of specific methylglutamate residues introduced into the chemoreceptors (methyl-accepting chemotaxis proteins or MCP) by CheR. Also mediates the irreversible deamidation of specific glutamine residues to glutamic acid. The polypeptide is Protein-glutamate methylesterase/protein-glutamine glutaminase 2 (Shewanella sp. (strain MR-4)).